Reading from the N-terminus, the 254-residue chain is MGVAVRVIPCLDVDAGRVVKGVNFENLRDAGDPVELAARYDLAGADELTFLDVTASSGERDTMFDVVSRTAETMFVPLTVGGGVRTPQDVDRLLRCGADKASINTAAVERPEVVDEITRRFGSQVLVLSLDARRTGNTASGFEVTTRGGRTLTGLDALQWAREAEERGVGEILLNSMDADGTREGFDLEMISAVREVVGVPLIASGGAGSPEHFPPAVAAGADAVLAASVFHFGPDHAIGDVKAALRAAGHEVR.

Residues aspartate 12 and aspartate 131 contribute to the active site.

The protein belongs to the HisA/HisF family. Heterodimer of HisH and HisF.

The protein localises to the cytoplasm. It catalyses the reaction 5-[(5-phospho-1-deoxy-D-ribulos-1-ylimino)methylamino]-1-(5-phospho-beta-D-ribosyl)imidazole-4-carboxamide + L-glutamine = D-erythro-1-(imidazol-4-yl)glycerol 3-phosphate + 5-amino-1-(5-phospho-beta-D-ribosyl)imidazole-4-carboxamide + L-glutamate + H(+). It participates in amino-acid biosynthesis; L-histidine biosynthesis; L-histidine from 5-phospho-alpha-D-ribose 1-diphosphate: step 5/9. Its function is as follows. IGPS catalyzes the conversion of PRFAR and glutamine to IGP, AICAR and glutamate. The HisF subunit catalyzes the cyclization activity that produces IGP and AICAR from PRFAR using the ammonia provided by the HisH subunit. The chain is Imidazole glycerol phosphate synthase subunit HisF from Kocuria rhizophila (strain ATCC 9341 / DSM 348 / NBRC 103217 / DC2201).